Here is a 340-residue protein sequence, read N- to C-terminus: Ferrochelatase (340 aa).

His-189 and Glu-292 together coordinate Fe cation.

Belongs to the ferrochelatase family.

It is found in the cytoplasm. It carries out the reaction heme b + 2 H(+) = protoporphyrin IX + Fe(2+). Its pathway is porphyrin-containing compound metabolism; protoheme biosynthesis; protoheme from protoporphyrin-IX: step 1/1. Catalyzes the ferrous insertion into protoporphyrin IX. This Pseudomonas syringae pv. tomato (strain ATCC BAA-871 / DC3000) protein is Ferrochelatase.